The following is a 174-amino-acid chain: N5-carboxyaminoimidazole ribonucleotide mutase (174 aa).

Substrate is bound by residues Ser-15, Asp-18, and Arg-45.

This sequence belongs to the AIR carboxylase family. Class I subfamily.

It catalyses the reaction 5-carboxyamino-1-(5-phospho-D-ribosyl)imidazole + H(+) = 5-amino-1-(5-phospho-D-ribosyl)imidazole-4-carboxylate. The protein operates within purine metabolism; IMP biosynthesis via de novo pathway; 5-amino-1-(5-phospho-D-ribosyl)imidazole-4-carboxylate from 5-amino-1-(5-phospho-D-ribosyl)imidazole (N5-CAIR route): step 2/2. Its function is as follows. Catalyzes the conversion of N5-carboxyaminoimidazole ribonucleotide (N5-CAIR) to 4-carboxy-5-aminoimidazole ribonucleotide (CAIR). The chain is N5-carboxyaminoimidazole ribonucleotide mutase from Pyrococcus abyssi (strain GE5 / Orsay).